Here is a 54-residue protein sequence, read N- to C-terminus: MARNDIRPIIKLKSTAGTGYTYVTRKNKRNNPDRISLKKYDPVVRKHVEFREER.

It belongs to the bacterial ribosomal protein bL33 family.

This is Large ribosomal subunit protein bL33 from Corynebacterium diphtheriae (strain ATCC 700971 / NCTC 13129 / Biotype gravis).